Reading from the N-terminus, the 428-residue chain is MRRDYVDPGYSPKDTDLICEFHIEPAAGISFEEASTHMAGESSIDSWTEISTLSPELAARLKPHVFYLDADTQTVRVAYSEDLFELGSVPQVLSAVAGNIFSMKIVDNLRLQDITFPKSMLREFEGPNFGLPGVRDIVGVKDRPLVGTIVKPKVGLTSEMHAEVAYNAFAGGCDLVKDDENLTDQKFNGFEKRAELTLKIAEKAEAETGERKMYLCNITAPTCEEMIRRLHVLKDLGASYAMIDIVPTGWTALQTLREAAADEGLALHAHRCMHSAFTRNPRHGVSMLLVAKLCRLIGLDQLHIGTVVGKMHGDKDEVLSIRDECVLDTVPADPEQHVLAQDWGGLKPMFPVASGGLAPTMIPDLYSIFGKEVIMQFGGGIHAHPMGTAAGAAACRQALEASLEGISLQDYAKDHKELEAALGKWLEK.

Lys-151 functions as the Proton acceptor in the catalytic mechanism. Substrate is bound at residue Lys-153. The Mg(2+) site is built by Lys-177, Asp-179, and Glu-180. Lys-177 carries the N6-carboxylysine modification. The active-site Proton acceptor is the His-270. Substrate-binding positions include Arg-271, His-303, 354–356 (SGG), and 376–379 (QFGG).

It belongs to the RuBisCO large chain family. Type III subfamily. In terms of assembly, homodimer. In contrast to form I RuBisCO, the form III RuBisCO is composed solely of large subunits. Mg(2+) serves as cofactor.

It carries out the reaction 2 (2R)-3-phosphoglycerate + 2 H(+) = D-ribulose 1,5-bisphosphate + CO2 + H2O. The enzyme catalyses D-ribulose 1,5-bisphosphate + O2 = 2-phosphoglycolate + (2R)-3-phosphoglycerate + 2 H(+). Reversibly inhibited by O(2). Functionally, catalyzes the addition of molecular CO(2) and H(2)O to ribulose 1,5-bisphosphate (RuBP), generating two molecules of 3-phosphoglycerate (3-PGA). Functions in an archaeal AMP degradation pathway, together with AMP phosphorylase and R15P isomerase. In Methanosarcina acetivorans (strain ATCC 35395 / DSM 2834 / JCM 12185 / C2A), this protein is Ribulose bisphosphate carboxylase.